Consider the following 392-residue polypeptide: Acetyl-CoA acetyltransferase (392 aa).

Cys85 serves as the catalytic Acyl-thioester intermediate. 4 residues coordinate CoA: Cys206, Ser207, Val209, and Lys332. The Proton acceptor role is filled by His336.

The protein belongs to the thiolase-like superfamily. Thiolase family. Interacts with HMG-CoA synthase (HMGCS) that catalyzes the second step in the pathway and with a DUF35 protein. The acetoacetyl-CoA thiolase/HMG-CoA synthase complex channels the intermediate via a fused CoA-binding site, which allows for efficient coupling of the endergonic thiolase reaction with the exergonic HMGCS reaction.

It carries out the reaction 2 acetyl-CoA = acetoacetyl-CoA + CoA. It functions in the pathway metabolic intermediate biosynthesis; (R)-mevalonate biosynthesis; (R)-mevalonate from acetyl-CoA: step 1/3. In terms of biological role, catalyzes the condensation of two acetyl-coA molecules into acetoacetyl-CoA. Functions in the mevalonate (MVA) pathway leading to isopentenyl diphosphate (IPP), a key precursor for the biosynthesis of isoprenoid compounds that are building blocks of archaeal membrane lipids. This is Acetyl-CoA acetyltransferase from Methanothermococcus thermolithotrophicus (Methanococcus thermolithotrophicus).